The primary structure comprises 401 residues: Glutamyl-tRNA reductase (401 aa).

Residues 45–48 (TCNR), Ser-101, 106–108 (EDQ), and Gln-112 contribute to the substrate site. The Nucleophile role is filled by Cys-46. Residue 177 to 182 (GYGDVG) coordinates NADP(+).

This sequence belongs to the glutamyl-tRNA reductase family. Homodimer.

The enzyme catalyses (S)-4-amino-5-oxopentanoate + tRNA(Glu) + NADP(+) = L-glutamyl-tRNA(Glu) + NADPH + H(+). The protein operates within porphyrin-containing compound metabolism; protoporphyrin-IX biosynthesis; 5-aminolevulinate from L-glutamyl-tRNA(Glu): step 1/2. Its function is as follows. Catalyzes the NADPH-dependent reduction of glutamyl-tRNA(Glu) to glutamate 1-semialdehyde (GSA). In Clostridium botulinum (strain Alaska E43 / Type E3), this protein is Glutamyl-tRNA reductase.